Here is a 64-residue protein sequence, read N- to C-terminus: Large ribosomal subunit protein bL35 (64 aa).

The interval 1–27 is disordered; that stretch reads MPKMKTKSGAKKRFKPTASGFKHKHAF.

This sequence belongs to the bacterial ribosomal protein bL35 family.

This chain is Large ribosomal subunit protein bL35, found in Azotobacter vinelandii (strain DJ / ATCC BAA-1303).